The following is a 955-amino-acid chain: MITSAAGIISLLDEEEPQLKEFALHKLNAVVNDFWAEISESVDKIEVLYEDEGFRSRQFAALVASKVFYHLGAFEESLNYALGAGDLFNVNDNSEYVETIIAKCIDHYTKQCVENAELPEGEKKPVDERLEGIVNKMFQRCLDDHKYKQAIGIALETRRLDIFEKTILESNDVPGMLAYSLKLCMSLMQNKQFRNKVLRVLVKIYMNLEKPDFINVCQCLIFLDDPQAVSDILEKLVKEDNLLMAYQICFDLYESASQQFLSSVIQNLRTVGTPIASVPGSTNTGTVPGSEKDSDAMEAEEKPGSTCVGKSAEINPEPKDQISKMIKILSGEMAIELHLQFLIRNNNTDLMILKNTKDAVRNSVCHTATVIANSFMHCGTTSDQFLRDNLEWLARATNWAKFTATASLGVIHKGHEKEALQLMATYLPKDTSPGSAYQEGGGLYALGLIHANHGGDIIDYLLNQLKNASNDIVRHGGSLGLGLAAMGTARQDVYDLLKTNLYQDDAVTGEAAGLALGLVMLGSKNAQAIEDMVGYAQETQHEKILRGLAVGIALVMYGRMEEADALIESLCRDKDPILRRSGMYTVAMAYCGSGNNKAIRRLLHVAVSDVNDDVRRAAVESLGFILFRTPEQCPSVVSLLSESYNPHVRYGAAMALGICCAGTGNKEAINLLEPMTNDPVNYVRQGALIASALIMIQQTEITCPKVSQFRQLYSKVINDKHDDVMAKFGAILAQGILDAGGHNVIISLQSRTGHTHMPSVVGVLVFTQFWFWFPLSHFLSLAFTPTCVIGLNKDLKMPKVQYKSNCKPSTFAYPPPLEVPKEKEKEKVSTAVLSITAKAKKKEKEKEKEKKEEEKMEVDETEKKDEKEKKKEPEPNFQLLDNPARVMPAQLKVLTMTESCRYQPFKPLSIGGIIILKDTSEDMEELVEPVAAHGPKIEEEEQEPEPPEPFEYIDD.

Residues 279 to 313 (PGSTNTGTVPGSEKDSDAMEAEEKPGSTCVGKSAE) are disordered. Over residues 290–303 (SEKDSDAMEAEEKP) the composition is skewed to basic and acidic residues. 10 PC repeats span residues 403–436 (TATA…PGSA), 441–474 (GGLY…DIVR), 476–510 (GGSL…VTGE), 511–545 (AAGL…EKIL), 547–580 (GLAV…ILRR), 581–616 (SGMY…DVRR), 617–649 (AAVE…PHVR), 651–685 (GAAM…YVRQ), 686–726 (GALI…DVMA), and 729–761 (GAIL…PSVV). Disordered regions lie at residues 839–879 (AKKK…NFQL) and 932–955 (AHGP…YIDD). Composition is skewed to basic and acidic residues over residues 842 to 854 (KEKE…KEEE) and 861 to 874 (TEKK…KEPE). A compositionally biased stretch (acidic residues) spans 938–955 (EEEEQEPEPPEPFEYIDD).

This sequence belongs to the proteasome subunit S1 family. In terms of assembly, component of the 19S proteasome regulatory particle complex. The 26S proteasome consists of a 20S core particle (CP) and two 19S regulatory subunits (RP). The regulatory particle is made of a lid composed of 9 subunits, a base containing 6 ATPases and few additional components including PSMD1. Interacts with ADRM1.

Functionally, component of the 26S proteasome, a multiprotein complex involved in the ATP-dependent degradation of ubiquitinated proteins. This complex plays a key role in the maintenance of protein homeostasis by removing misfolded or damaged proteins, which could impair cellular functions, and by removing proteins whose functions are no longer required. Therefore, the proteasome participates in numerous cellular processes, including cell cycle progression, apoptosis, or DNA damage repair. This is 26S proteasome non-ATPase regulatory subunit 1 (PSMD1) from Gallus gallus (Chicken).